The primary structure comprises 361 residues: Single-stranded DNA-binding protein 2 (361 aa).

The residue at position 6 (lysine 6) is an N6-acetyllysine. Residues 18-50 (AREKLALYVYEYLLHVGAQKSAQTFLSEIRWEK) enclose the LisH domain. 2 disordered regions span residues 147 to 171 (GGVPGSQPLLPSGMDPTRQQGHPNM) and 194 to 361 (GAMR…TMSV). Residues 204–219 (GGPGMPGMNMGPGGGR) are compositionally biased toward gly residues. The segment covering 225 to 236 (TNANSIPYSSAS) has biased composition (polar residues). Over residues 246–256 (GGGPPGTPIMP) the composition is skewed to pro residues. Positions 289 to 299 (GSDGPMGGLGG) are enriched in gly residues. The span at 317-332 (ISKNSPNNMSLSNQPG) shows a compositional bias: polar residues. Residue serine 321 is modified to Phosphoserine. Threonine 333 bears the Phosphothreonine mark. A compositionally biased stretch (polar residues) spans 346 to 361 (NPFQSESYSPSMTMSV).

Ubiquitous.

The protein localises to the nucleus. This Homo sapiens (Human) protein is Single-stranded DNA-binding protein 2 (SSBP2).